The sequence spans 193 residues: Holliday junction branch migration complex subunit RuvA (193 aa).

Residues 1–64 form a domain I region; sequence MIGRIAGTLL…EDAHLLYGFL (64 aa). A domain II region spans residues 65 to 139; sequence TPPERSTFRE…GKLGADLGPL (75 aa). A flexible linker region spans residues 139–143; the sequence is LAGAA. A domain III region spans residues 144 to 193; it reads SPSDHATDILNALVALGYSEKEALAAIKNVPAGTGVSEGIKLSLKALSKA.

Belongs to the RuvA family. As to quaternary structure, homotetramer. Forms an RuvA(8)-RuvB(12)-Holliday junction (HJ) complex. HJ DNA is sandwiched between 2 RuvA tetramers; dsDNA enters through RuvA and exits via RuvB. An RuvB hexamer assembles on each DNA strand where it exits the tetramer. Each RuvB hexamer is contacted by two RuvA subunits (via domain III) on 2 adjacent RuvB subunits; this complex drives branch migration. In the full resolvosome a probable DNA-RuvA(4)-RuvB(12)-RuvC(2) complex forms which resolves the HJ.

The protein resides in the cytoplasm. In terms of biological role, the RuvA-RuvB-RuvC complex processes Holliday junction (HJ) DNA during genetic recombination and DNA repair, while the RuvA-RuvB complex plays an important role in the rescue of blocked DNA replication forks via replication fork reversal (RFR). RuvA specifically binds to HJ cruciform DNA, conferring on it an open structure. The RuvB hexamer acts as an ATP-dependent pump, pulling dsDNA into and through the RuvAB complex. HJ branch migration allows RuvC to scan DNA until it finds its consensus sequence, where it cleaves and resolves the cruciform DNA. The polypeptide is Holliday junction branch migration complex subunit RuvA (Burkholderia mallei (strain NCTC 10229)).